The sequence spans 189 residues: dCTP deaminase (189 aa).

Residues 112–117 (KSTYAR), 136–138 (TLE), Gln-157, Tyr-171, and Gln-181 each bind dCTP. Glu-138 serves as the catalytic Proton donor/acceptor.

It belongs to the dCTP deaminase family. As to quaternary structure, homotrimer.

The enzyme catalyses dCTP + H2O + H(+) = dUTP + NH4(+). Its pathway is pyrimidine metabolism; dUMP biosynthesis; dUMP from dCTP (dUTP route): step 1/2. Its function is as follows. Catalyzes the deamination of dCTP to dUTP. This chain is dCTP deaminase, found in Paraburkholderia phymatum (strain DSM 17167 / CIP 108236 / LMG 21445 / STM815) (Burkholderia phymatum).